A 348-amino-acid polypeptide reads, in one-letter code: Alpha-2-HS-glycoprotein (348 aa).

The first 18 residues, Met1–Ser18, serve as a signal peptide directing secretion. The Cystatin fetuin-A-type 1 domain maps to Ala19–His133. 6 cysteine pairs are disulfide-bonded: Cys32-Cys339, Cys89-Cys100, Cys114-Cys132, Cys146-Cys149, Cys208-Cys219, and Cys230-Cys247. Asn99 carries N-linked (GlcNAc...) asparagine glycosylation. Phosphoserine occurs at positions 134 and 138. One can recognise a Cystatin fetuin-A-type 2 domain in the interval Lys144 to Asn255. N-linked (GlcNAc...) asparagine glycans are attached at residues Asn156 and Asn176. Phosphoserine is present on residues Ser307, Ser311, Ser314, and Ser316.

The protein belongs to the fetuin family. Phosphorylated by FAM20C in the extracellular medium. As to expression, expressed by the liver and secreted in plasma.

The protein resides in the secreted. The chain is Alpha-2-HS-glycoprotein (AHSG) from Meriones unguiculatus (Mongolian jird).